A 135-amino-acid chain; its full sequence is Class I hydrophobin 2 (135 aa).

An N-terminal signal peptide occupies residues 1-20; sequence MFARLTSTLFALAAVSAVFA. 4 disulfide bridges follow: Cys29/Cys114, Cys36/Cys107, Cys37/Cys73, and Cys115/Cys128. N-linked (GlcNAc...) asparagine glycosylation is found at Asn117 and Asn132.

It belongs to the fungal hydrophobin family. Self-assembles to form functional amyloid fibrils called rodlets. Self-assembly into fibrillar rodlets occurs spontaneously at hydrophobic:hydrophilic interfaces and the rodlets further associate laterally to form amphipathic monolayers.

The protein resides in the secreted. The protein localises to the cell wall. Functionally, aerial growth, conidiation, and dispersal of filamentous fungi in the environment rely upon a capability of their secreting small amphipathic proteins called hydrophobins (HPBs) with low sequence identity. Class I can self-assemble into an outermost layer of rodlet bundles on aerial cell surfaces, conferring cellular hydrophobicity that supports fungal growth, development and dispersal; whereas Class II form highly ordered films at water-air interfaces through intermolecular interactions but contribute nothing to the rodlet structure. The polypeptide is Class I hydrophobin 2 (Coprinopsis cinerea (strain Okayama-7 / 130 / ATCC MYA-4618 / FGSC 9003) (Inky cap fungus)).